We begin with the raw amino-acid sequence, 40 residues long: Sulfur globule protein TR0 (40 aa).

It to C.vinosum CV1 and CV2. As to quaternary structure, the protein envelope of the sulfur globules is composed of the three different proteins TR0, TR1 and TR2.

In terms of biological role, structural protein of the sulfur globules, which are intracellular globules that serve for sulfur storage in purple sulfur bacteria. The polypeptide is Sulfur globule protein TR0 (Thiocapsa roseopersicina).